The primary structure comprises 243 residues: UPF0246 protein SpyM51747 (243 aa).

It belongs to the UPF0246 family.

In Streptococcus pyogenes serotype M5 (strain Manfredo), this protein is UPF0246 protein SpyM51747.